Here is a 175-residue protein sequence, read N- to C-terminus: Disulfide bond formation protein B 2 (175 aa).

Topologically, residues 1-9 (MYLARTRFL) are cytoplasmic. Residues 10–26 (FFLASLACASIIGTAFY) traverse the membrane as a helical segment. Topologically, residues 27-44 (LQQTFGLDPCFLCLIQRA) are periplasmic. C36 and C39 are oxidised to a cystine. Residues 45-61 (AIIACGVLALCAACHAP) traverse the membrane as a helical segment. Residues 62–68 (GPTGMRR) are Cytoplasmic-facing. A helical membrane pass occupies residues 69–85 (YSLGFLLIALTGLVTAG). The Periplasmic segment spans residues 86-142 (AQVWLQTASADQLIPFITKLEHLLSLLSLDMCIDRLRSDAMFCAEITWTLFGISLPE). Residues 143 to 161 (WSLLAFTGLALLPLYPLFS) traverse the membrane as a helical segment. Residues 162–175 (EFSHWLATKDRARY) lie on the Cytoplasmic side of the membrane.

Belongs to the DsbB family.

The protein resides in the cell inner membrane. Required for disulfide bond formation in some periplasmic proteins. Acts by oxidizing the DsbA protein. The protein is Disulfide bond formation protein B 2 of Pseudomonas savastanoi pv. phaseolicola (strain 1448A / Race 6) (Pseudomonas syringae pv. phaseolicola (strain 1448A / Race 6)).